The following is a 155-amino-acid chain: MHPFQWCNGCFCGLGLVSTNKSCSMPPISFQDLPLNIYMVIFGTGIFVFMLSLIFCCYFISKLRNQAQSERYGYKEVVLKGDAKKLQLYGQTCAVCLEDFKGKDELGVLPCQHAFHRKCLVKWLEVRCVCPMCNKPIASPSEATQNIGILLDELV.

Residues Val40–Ile60 traverse the membrane as a helical segment. The segment at Cys93 to Asn134 adopts an RING-type; atypical zinc-finger fold.

In terms of tissue distribution, widely expressed in several tissues and cell lines.

Its subcellular location is the golgi apparatus. The protein localises to the endoplasmic reticulum. The protein resides in the membrane. Its function is as follows. May induce necrosis and apoptosis. May play a role in cell viability. This is RING finger protein 122 (RNF122) from Homo sapiens (Human).